Reading from the N-terminus, the 44-residue chain is Large ribosomal subunit protein bL34 (44 aa).

The disordered stretch occupies residues 1 to 26; it reads MQRTLGGTNRKRKRTSGFRARMRTPD. Positions 9–22 are enriched in basic residues; the sequence is NRKRKRTSGFRARM.

Belongs to the bacterial ribosomal protein bL34 family.

The sequence is that of Large ribosomal subunit protein bL34 from Trichormus variabilis (strain ATCC 29413 / PCC 7937) (Anabaena variabilis).